The sequence spans 156 residues: Radiation-inducible immediate-early gene IEX-1 (156 aa).

Residues 1–62 (MCHSRSCHPT…SASRGHRKRS (62 aa)) are disordered. Over 1–82 (MCHSRSCHPT…RQLPVEEPNP (82 aa)) the chain is Cytoplasmic. At T18 the chain carries Phosphothreonine; by MAPK1. The residue at position 31 (S31) is a Phosphoserine. Positions 44–55 (PAAAPAGRPSAS) are enriched in low complexity. Residues 83 to 99 (AKRLLFLLLTIVFCQIL) traverse the membrane as a helical; Signal-anchor for type II membrane protein segment. Topologically, residues 100–156 (MAEEGVPAPLPPEDAPNAASLAPTPVSAVLEPFNLTSEPSDYALDLSTFLQQHPAAF) are extracellular. Residue T123 is modified to Phosphothreonine; by MAPK1. A Phosphoserine; by MAPK1 modification is found at S126. N-linked (GlcNAc...) asparagine glycosylation occurs at N133.

This sequence belongs to the IER3 family. Interacts with the PPP2R5C-PP2A holoenzyme and ERK kinases; regulates ERK dephosphorylation. Post-translationally, phosphorylated at Thr-18, Thr-123 and Ser-126 by MAPK1/ERK2 and probably MAPK3/ERK1. Upon phosphorylation by MAPK1/ERK2 and MAPK3/ERK1, acquires the ability to inhibit cell death induced by various stimuli. Glycosylated.

The protein resides in the membrane. May play a role in the ERK signaling pathway by inhibiting the dephosphorylation of ERK by phosphatase PP2A-PPP2R5C holoenzyme. Also acts as an ERK downstream effector mediating survival. As a member of the NUPR1/RELB/IER3 survival pathway, may provide pancreatic ductal adenocarcinoma with remarkable resistance to cell stress, such as starvation or gemcitabine treatment. This chain is Radiation-inducible immediate-early gene IEX-1 (IER3), found in Homo sapiens (Human).